We begin with the raw amino-acid sequence, 761 residues long: Cyclin-F (761 aa).

The Nuclear localization signal 1 signature appears at 19 to 27 (RRRIKRRPR). One can recognise an F-box domain in the interval 28-75 (VLTLLSLPEDVLLYVLECLPAVDILSMREVHPHLRSLVDSHSSVWARA). One can recognise a Cyclin N-terminal domain in the interval 300–411 (NKSSIFTTQK…EIISALEGKI (112 aa)). Short sequence motifs (d box) lie at residues 316-319 (RYIL) and 355-358 (RAKL). Disordered stretches follow at residues 575-594 (NKTK…SFVT) and 677-761 (AENG…SDEL). A compositionally biased stretch (basic and acidic residues) spans 580 to 590 (RREESIQEDRG). Residues 589-745 (RGSFVTTPTA…LLKASRRQVK (157 aa)) are PEST. Residues 691 to 718 (SSGYSSVSSGGSPTSSSSPGLPFTPTPG) are compositionally biased toward low complexity. The segment covering 739-749 (ASRRQVKRKNQ) has biased composition (basic residues).

The protein belongs to the cyclin family. Cyclin AB subfamily. As to quaternary structure, component of the SCF(CCNF) complex.

It is found in the nucleus. It localises to the cytoplasm. Its subcellular location is the perinuclear region. The protein resides in the cytoskeleton. The protein localises to the microtubule organizing center. It is found in the centrosome. It localises to the centriole. Substrate recognition component of the SCF(CCNF) E3 ubiquitin-protein ligase complex which mediates the ubiquitination and subsequent proteasomal degradation of target proteins. The SCF(CCNF) E3 ubiquitin-protein ligase complex is an integral component of the ubiquitin proteasome system (UPS) and links proteasome degradation to the cell cycle. Mediates the substrate recognition and the proteasomal degradation of various target proteins during G2 phase involved in the regulation of cell cycle progression and in the maintenance of genome stability. The protein is Cyclin-F (ccnf) of Xenopus laevis (African clawed frog).